The primary structure comprises 285 residues: MSARILDGKALAQELRAEAAAQIAELRTQIDRPPTIAVVQVGDDPAATRYVRSIDRLCQSLGAACRAIALPAETAQADLEATVATLSADDRIDGILLQLPLPAGLTLDGVLSRLAPEKDLDGIHPINAGLLAQGRPTLTPNTPAGGIELMRRYGIDIRGRRAAVVGRSAIVGRPMALLLLQADATVTICHSRTPDLGAVLRECDIIAAAAGRPGLITADMVKPGATVIDFGTNVLADGSMVGDVDFAAVAEVAGAITPVPGGTGPVTNIMLMRNLITATRTRLGI.

NADP(+)-binding positions include 166 to 168, Ser-191, and Thr-232; that span reads GRS.

Belongs to the tetrahydrofolate dehydrogenase/cyclohydrolase family. As to quaternary structure, homodimer.

The enzyme catalyses (6R)-5,10-methylene-5,6,7,8-tetrahydrofolate + NADP(+) = (6R)-5,10-methenyltetrahydrofolate + NADPH. It carries out the reaction (6R)-5,10-methenyltetrahydrofolate + H2O = (6R)-10-formyltetrahydrofolate + H(+). The protein operates within one-carbon metabolism; tetrahydrofolate interconversion. Functionally, catalyzes the oxidation of 5,10-methylenetetrahydrofolate to 5,10-methenyltetrahydrofolate and then the hydrolysis of 5,10-methenyltetrahydrofolate to 10-formyltetrahydrofolate. The protein is Bifunctional protein FolD of Chloroflexus aurantiacus (strain ATCC 29366 / DSM 635 / J-10-fl).